Reading from the N-terminus, the 461-residue chain is Cysteine--tRNA ligase (461 aa).

Cys-28 lines the Zn(2+) pocket. Residues Val-30–His-40 carry the 'HIGH' region motif. 3 residues coordinate Zn(2+): Cys-209, His-234, and Glu-238. Residues Lys-266–Ser-270 carry the 'KMSKS' region motif. Position 269 (Lys-269) interacts with ATP.

Belongs to the class-I aminoacyl-tRNA synthetase family. Monomer. Zn(2+) serves as cofactor.

The protein localises to the cytoplasm. It catalyses the reaction tRNA(Cys) + L-cysteine + ATP = L-cysteinyl-tRNA(Cys) + AMP + diphosphate. This is Cysteine--tRNA ligase from Hamiltonella defensa subsp. Acyrthosiphon pisum (strain 5AT).